The chain runs to 230 residues: Orotidine 5'-phosphate decarboxylase (230 aa).

Residues Asp-12, Lys-34, 61-70 (DMKLLDIDNT), Thr-116, Arg-177, Gln-186, and Arg-207 contribute to the substrate site. Lys-63 functions as the Proton donor in the catalytic mechanism.

Belongs to the OMP decarboxylase family. Type 1 subfamily. As to quaternary structure, homodimer.

It carries out the reaction orotidine 5'-phosphate + H(+) = UMP + CO2. The protein operates within pyrimidine metabolism; UMP biosynthesis via de novo pathway; UMP from orotate: step 2/2. Its function is as follows. Catalyzes the decarboxylation of orotidine 5'-monophosphate (OMP) to uridine 5'-monophosphate (UMP). The sequence is that of Orotidine 5'-phosphate decarboxylase from Rhizobium rhizogenes (strain K84 / ATCC BAA-868) (Agrobacterium radiobacter).